The chain runs to 324 residues: UDP-N-acetylenolpyruvoylglucosamine reductase (324 aa).

The FAD-binding PCMH-type domain occupies 36–211 (FRAGGLAELM…AEDKAKIRND (176 aa)). The active site involves R183. S232 acts as the Proton donor in catalysis. E302 is a catalytic residue.

It belongs to the MurB family. FAD serves as cofactor.

The protein localises to the cytoplasm. It catalyses the reaction UDP-N-acetyl-alpha-D-muramate + NADP(+) = UDP-N-acetyl-3-O-(1-carboxyvinyl)-alpha-D-glucosamine + NADPH + H(+). Its pathway is cell wall biogenesis; peptidoglycan biosynthesis. In terms of biological role, cell wall formation. This chain is UDP-N-acetylenolpyruvoylglucosamine reductase, found in Sinorhizobium medicae (strain WSM419) (Ensifer medicae).